The following is a 1035-amino-acid chain: Probable LRR receptor-like serine/threonine-protein kinase At1g53440 (1035 aa).

The signal sequence occupies residues 1-26 (MGFFFSTRKGLLLIIFICLDIFGSNA). Topologically, residues 27–607 (QLLPEDEVQT…VDTGKPLSNG (581 aa)) are extracellular. N-linked (GlcNAc...) asparagine glycans are attached at residues Asn46, Asn75, Asn83, and Asn110. LRR repeat units lie at residues 87–110 (VCRV…EFGN), 111–135 (LTRL…LSQI), 137–158 (LEIL…LGQI), 160–182 (TLTD…LGNL), 183–206 (RSLK…LSNL), 208–232 (NLTN…NWTR), and 234–254 (VRLD…ISNL). Asn194, Asn208, and Asn229 each carry an N-linked (GlcNAc...) asparagine glycan. Residues Asn256 and Asn277 are each glycosylated (N-linked (GlcNAc...) asparagine). LRR repeat units lie at residues 278–302 (MTNM…IGTS), 303–326 (MTML…TFRS), 328–349 (NAFN…QFIL), and 350–372 (DSKQ…SCNQ). N-linked (GlcNAc...) asparagine glycosylation is found at Asn317, Asn337, Asn361, Asn386, Asn469, and Asn559. Residues 608–628 (VVAGIVIAACVAFGLLVLVIL) traverse the membrane as a helical segment. At 629–1035 (RLTGYLGGKE…LDDLTDVEIE (407 aa)) the chain is on the cytoplasmic side. A Phosphothreonine modification is found at Thr656. The Protein kinase domain occupies 667–948 (FDPENKIGEG…QGKIKVQPPL (282 aa)). Residues 673-681 (IGEGGFGPV) and Lys695 each bind ATP. At Tyr740 the chain carries Phosphotyrosine. The Proton acceptor role is filled by Asp793. Ser826 is modified (phosphoserine). Phosphothreonine occurs at positions 827 and 832. Phosphotyrosine is present on Tyr840. The segment at 969–1035 (LSQDSESQVS…LDDLTDVEIE (67 aa)) is disordered. The span at 972 to 981 (DSESQVSTYT) shows a compositional bias: polar residues. Positions 1009–1023 (SLLQQEEGNSSSSSR) are enriched in low complexity.

Belongs to the protein kinase superfamily. Ser/Thr protein kinase family.

It localises to the cell membrane. It catalyses the reaction L-seryl-[protein] + ATP = O-phospho-L-seryl-[protein] + ADP + H(+). The catalysed reaction is L-threonyl-[protein] + ATP = O-phospho-L-threonyl-[protein] + ADP + H(+). This Arabidopsis thaliana (Mouse-ear cress) protein is Probable LRR receptor-like serine/threonine-protein kinase At1g53440.